We begin with the raw amino-acid sequence, 176 residues long: Glutathione-regulated potassium-efflux system ancillary protein KefF (176 aa).

Residues histidine 8, 14–17, 65–68, and 105–108 contribute to the FMN site; these read SHAN, MQWY, and TTGG.

Belongs to the NAD(P)H dehydrogenase (quinone) family. KefF subfamily. Homodimer. Interacts with KefC. FMN is required as a cofactor.

It localises to the cell inner membrane. It catalyses the reaction a quinone + NADH + H(+) = a quinol + NAD(+). The enzyme catalyses a quinone + NADPH + H(+) = a quinol + NADP(+). Regulatory subunit of a potassium efflux system that confers protection against electrophiles. Required for full activity of KefC. Shows redox enzymatic activity, but this enzymatic activity is not required for activation of KefC. The sequence is that of Glutathione-regulated potassium-efflux system ancillary protein KefF from Salmonella dublin (strain CT_02021853).